Consider the following 224-residue polypeptide: Transcriptional regulatory protein CiaR (224 aa).

One can recognise a Response regulatory domain in the interval 3–116; that stretch reads KILLVEDDLG…ELKMRIQALL (114 aa). Asp51 is modified (4-aspartylphosphate). The ompR/PhoB-type DNA-binding region spans 124 to 222; sequence ENTLTYGNIV…LRSVGYLLKD (99 aa).

Phosphorylated by CiaH.

It localises to the cytoplasm. In terms of biological role, member of the two-component regulatory system CiaH/CiaR. Involved in early steps of competence regulation and in penicillin susceptibility. This is Transcriptional regulatory protein CiaR (ciaR) from Streptococcus pneumoniae (strain ATCC BAA-255 / R6).